The following is a 382-amino-acid chain: 1-deoxy-D-xylulose 5-phosphate reductoisomerase (382 aa).

Residues Thr-11, Gly-12, Ser-13, Ile-14, and Asn-123 each contribute to the NADPH site. Lys-124 is a 1-deoxy-D-xylulose 5-phosphate binding site. Glu-125 serves as a coordination point for NADPH. Asp-149 lines the Mn(2+) pocket. Ser-150, Glu-151, Ser-173, and His-196 together coordinate 1-deoxy-D-xylulose 5-phosphate. Position 151 (Glu-151) interacts with Mn(2+). NADPH is bound at residue Gly-202. 1-deoxy-D-xylulose 5-phosphate contacts are provided by Ser-209, Asn-214, Lys-215, and Glu-218. Glu-218 lines the Mn(2+) pocket.

It belongs to the DXR family. Mg(2+) is required as a cofactor. Mn(2+) serves as cofactor.

It catalyses the reaction 2-C-methyl-D-erythritol 4-phosphate + NADP(+) = 1-deoxy-D-xylulose 5-phosphate + NADPH + H(+). The protein operates within isoprenoid biosynthesis; isopentenyl diphosphate biosynthesis via DXP pathway; isopentenyl diphosphate from 1-deoxy-D-xylulose 5-phosphate: step 1/6. Its function is as follows. Catalyzes the NADPH-dependent rearrangement and reduction of 1-deoxy-D-xylulose-5-phosphate (DXP) to 2-C-methyl-D-erythritol 4-phosphate (MEP). The sequence is that of 1-deoxy-D-xylulose 5-phosphate reductoisomerase from Phocaeicola vulgatus (strain ATCC 8482 / DSM 1447 / JCM 5826 / CCUG 4940 / NBRC 14291 / NCTC 11154) (Bacteroides vulgatus).